A 306-amino-acid chain; its full sequence is Galactosylgalactosylxylosylprotein 3-beta-glucuronosyltransferase I (306 aa).

Over 1 to 11 the chain is Cytoplasmic; the sequence is MSEVRIRPRQV. The chain crosses the membrane as a helical; Signal-anchor for type II membrane protein span at residues 12-29; the sequence is LILIIVFLVVLMMVHRNG. The Lumenal segment spans residues 30 to 306; it reads KRTCQGPEYL…GQRSDGGMEV (277 aa). N90 carries an N-linked (GlcNAc...) asparagine glycan. A Mn(2+)-binding site is contributed by D163. Catalysis depends on E252, which acts as the Proton acceptor.

Belongs to the glycosyltransferase 43 family. The cofactor is Mn(2+).

The protein resides in the golgi apparatus membrane. It carries out the reaction 3-O-(beta-D-galactosyl-(1-&gt;3)-beta-D-galactosyl-(1-&gt;4)-beta-D-xylosyl)-L-seryl-[protein] + UDP-alpha-D-glucuronate = 3-O-(beta-D-GlcA-(1-&gt;3)-beta-D-Gal-(1-&gt;3)-beta-D-Gal-(1-&gt;4)-beta-D-Xyl)-L-seryl-[protein] + UDP + H(+). It participates in protein modification; protein glycosylation. In terms of biological role, involved in the biosynthesis of L2/HNK-1 carbohydrate epitope on both glycolipids and glycoproteins. Shows strict specificity for Gal-beta-1,3-Gal-beta-1,4-Xyl, exhibiting negligible incorporation into other galactoside substrates. The protein is Galactosylgalactosylxylosylprotein 3-beta-glucuronosyltransferase I (GlcAT-I) of Drosophila melanogaster (Fruit fly).